Reading from the N-terminus, the 229-residue chain is Potassium/proton antiporter CemA (229 aa).

3 helical membrane-spanning segments follow: residues F7–F27, I107–G127, and I189–I209.

Belongs to the CemA family.

The protein localises to the plastid. It is found in the chloroplast inner membrane. The catalysed reaction is K(+)(in) + H(+)(out) = K(+)(out) + H(+)(in). Its function is as follows. Contributes to K(+)/H(+) antiport activity by supporting proton efflux to control proton extrusion and homeostasis in chloroplasts in a light-dependent manner to modulate photosynthesis. Prevents excessive induction of non-photochemical quenching (NPQ) under continuous-light conditions. Indirectly promotes efficient inorganic carbon uptake into chloroplasts. In Guizotia abyssinica (Niger), this protein is Potassium/proton antiporter CemA.